We begin with the raw amino-acid sequence, 714 residues long: Fatty acid oxidation complex subunit alpha (714 aa).

The interval Met1–Pro190 is enoyl-CoA hydratase. The segment at Ala306–Gln714 is 3-hydroxyacyl-CoA dehydrogenase.

It in the N-terminal section; belongs to the enoyl-CoA hydratase/isomerase family. In the central section; belongs to the 3-hydroxyacyl-CoA dehydrogenase family. Heterotetramer of two alpha chains (FadJ) and two beta chains (FadI).

It is found in the cytoplasm. The catalysed reaction is a (3S)-3-hydroxyacyl-CoA = a (2E)-enoyl-CoA + H2O. It carries out the reaction a 4-saturated-(3S)-3-hydroxyacyl-CoA = a (3E)-enoyl-CoA + H2O. It catalyses the reaction a (3S)-3-hydroxyacyl-CoA + NAD(+) = a 3-oxoacyl-CoA + NADH + H(+). The enzyme catalyses (3S)-3-hydroxybutanoyl-CoA = (3R)-3-hydroxybutanoyl-CoA. It functions in the pathway lipid metabolism; fatty acid beta-oxidation. Functionally, catalyzes the formation of a hydroxyacyl-CoA by addition of water on enoyl-CoA. Also exhibits 3-hydroxyacyl-CoA epimerase and 3-hydroxyacyl-CoA dehydrogenase activities. Strongly involved in the anaerobic degradation of long and medium-chain fatty acids in the presence of nitrate and weakly involved in the aerobic degradation of long-chain fatty acids. The chain is Fatty acid oxidation complex subunit alpha (fadJ) from Escherichia coli (strain K12).